We begin with the raw amino-acid sequence, 86 residues long: Small ribosomal subunit protein uS15 (86 aa).

It belongs to the universal ribosomal protein uS15 family. In terms of assembly, part of the 30S ribosomal subunit. Forms a bridge to the 50S subunit in the 70S ribosome, contacting the 23S rRNA.

Functionally, one of the primary rRNA binding proteins, it binds directly to 16S rRNA where it helps nucleate assembly of the platform of the 30S subunit by binding and bridging several RNA helices of the 16S rRNA. Forms an intersubunit bridge (bridge B4) with the 23S rRNA of the 50S subunit in the ribosome. The sequence is that of Small ribosomal subunit protein uS15 from Mycoplasma genitalium (strain ATCC 33530 / DSM 19775 / NCTC 10195 / G37) (Mycoplasmoides genitalium).